Here is a 473-residue protein sequence, read N- to C-terminus: Homeobox protein ATH1 (473 aa).

The segment at 205-221 (SKYLHSVQEILSHFAAY) is SR/KY domain. Positions 266 to 336 (QRRALEAKKT…NLRERICKKI (71 aa)) are BELL domain. Residues 372-434 (IWRPQRGLPE…NARVRLWKPM (63 aa)) constitute a DNA-binding region (homeobox). The interval 448–473 (NNSHIQPNGPTLRMPKSVMMSQAMHK) is disordered.

The protein belongs to the TALE/BELL homeobox family. May form heterodimeric complex with the TALE/KNOX protein STM. Most abundant in flowers.

It is found in the nucleus. In terms of biological role, transcription factor which may be involved in the signal transduction pathway downstream of the COP1 gene. Controls floral competency as a specific activator of FLC expression. Is responsive of the nuclear import of SHOOT MERISTEMLESS (STM). This chain is Homeobox protein ATH1 (ATH1), found in Arabidopsis thaliana (Mouse-ear cress).